We begin with the raw amino-acid sequence, 588 residues long: Phenol 2-monooxygenase fsqG (588 aa).

FAD is bound by residues 9-38 (DVLI…LIDW), 17-18 (PA), 37-39 (DWK), 45-50 (TGRADG), Tyr-232, 289-299 (ARHNRIFLAGD), Asp-299, and 309-313 (GQGMN). Positions 49 and 232 each coordinate substrate.

It belongs to the PheA/TfdB FAD monooxygenase family. In terms of assembly, homodimer. FAD is required as a cofactor.

Its pathway is secondary metabolite biosynthesis. In terms of biological role, phenol 2-monooxygenase; part of the gene cluster that mediates the biosynthesis of the isoquinoline alkaloids fumisoquin A, fumisoquin B and fumisoquin C; as well as small amounts of fumipyrrole as a shunt metabolite. The products of the cluster lead to a brown coloration and are important for growth and conidiation. The nonribosomal peptide synthetase-like protein fsqF, which lacks a canonical condensation domain, is required for addition of a serine-derived dehydroalanine moiety to activated tyrosine but is not essential for the subsequent steps leading to isoquinoline formation. A different enzyme, most likely the ATP-grasp enzyme fsqD, is responsible for activation of tyrosine. Three additional enzymes encoded by the fsq cluster, the N-methyltransferase fsqC, the phenol 2-monooxygenase fsqG and the FAD-dependent oxidase fsqB, catalyze the formation of the isoquinoline ring system in the fumisoquins. FsqB converts the fspF thiolation domain-bound (2S,4S,5S)-2-amino-6-(3,4-dihydroxyphenyl)-4-hydroxy-5-(methylamino)hexanoyl into isoquinoline. The cyclization most likely proceeds via a two-step mechanism, beginning with FAD-dependent oxidation of the methyl group to an iminium species followed by electrophilic attack on the deprotonated phenol. The polypeptide is Phenol 2-monooxygenase fsqG (Aspergillus fumigatus (strain ATCC MYA-4609 / CBS 101355 / FGSC A1100 / Af293) (Neosartorya fumigata)).